The following is a 275-amino-acid chain: 3',5'-cyclic adenosine monophosphate phosphodiesterase CpdA (275 aa).

Positions 22, 24, 64, 94, 164, 203, and 205 each coordinate Fe cation. Residues H24, D64, and 94-95 contribute to the AMP site; that span reads NH. Residue H205 participates in AMP binding.

Belongs to the cyclic nucleotide phosphodiesterase class-III family. Requires Fe(2+) as cofactor.

The enzyme catalyses 3',5'-cyclic AMP + H2O = AMP + H(+). Functionally, hydrolyzes cAMP to 5'-AMP. Plays an important regulatory role in modulating the intracellular concentration of cAMP, thereby influencing cAMP-dependent processes. The chain is 3',5'-cyclic adenosine monophosphate phosphodiesterase CpdA from Escherichia coli O157:H7.